Reading from the N-terminus, the 365-residue chain is Histidinol-phosphate aminotransferase (365 aa).

The interval M1–P22 is disordered. K221 is subject to N6-(pyridoxal phosphate)lysine.

The protein belongs to the class-II pyridoxal-phosphate-dependent aminotransferase family. Histidinol-phosphate aminotransferase subfamily. Homodimer. Pyridoxal 5'-phosphate is required as a cofactor.

The enzyme catalyses L-histidinol phosphate + 2-oxoglutarate = 3-(imidazol-4-yl)-2-oxopropyl phosphate + L-glutamate. It participates in amino-acid biosynthesis; L-histidine biosynthesis; L-histidine from 5-phospho-alpha-D-ribose 1-diphosphate: step 7/9. The polypeptide is Histidinol-phosphate aminotransferase (Nitrobacter winogradskyi (strain ATCC 25391 / DSM 10237 / CIP 104748 / NCIMB 11846 / Nb-255)).